We begin with the raw amino-acid sequence, 96 residues long: Putative pterin-4-alpha-carbinolamine dehydratase (96 aa).

The protein belongs to the pterin-4-alpha-carbinolamine dehydratase family.

The catalysed reaction is (4aS,6R)-4a-hydroxy-L-erythro-5,6,7,8-tetrahydrobiopterin = (6R)-L-erythro-6,7-dihydrobiopterin + H2O. In Herpetosiphon aurantiacus (strain ATCC 23779 / DSM 785 / 114-95), this protein is Putative pterin-4-alpha-carbinolamine dehydratase.